Here is a 2242-residue protein sequence, read N- to C-terminus: Multifunctional protein CAD (2242 aa).

Positions 1–365 (MATLFLDDGS…CARDVKLGVN (365 aa)) are GATase (Glutamine amidotransferase). Ser-44, Gly-222, and Gly-224 together coordinate L-glutamine. The Glutamine amidotransferase type-1 domain maps to 177-363 (KIMAVDCGMK…LECARDVKLG (187 aa)). The active-site Nucleophile; for GATase activity is the Cys-252. Leu-253, Gln-256, Asn-294, Gly-296, and Phe-297 together coordinate L-glutamine. Residues His-336 and Glu-338 each act as for GATase activity in the active site. The interval 366-397 (LDKTVKGRVISHYSFKNGTENSKTPPGRIQPH) is linker. The CPSase A stretch occupies residues 398 to 937 (KVLILGSGGL…GEGHDLDFTK (540 aa)). The CPSase (Carbamoyl-phosphate synthase) stretch occupies residues 398 to 1462 (KVLILGSGGL…TPPVKTHIDS (1065 aa)). 11 residues coordinate ATP: Arg-518, Arg-558, Gly-564, Gly-565, Lys-595, Glu-602, Gly-628, Ile-629, His-630, Gln-671, and Glu-685. 2 ATP-grasp domains span residues 522 to 714 (VEKM…KLAL) and 1057 to 1248 (SRML…KVIM). Gln-671, Glu-685, and Asn-687 together coordinate Mg(2+). The Mn(2+) site is built by Gln-671, Glu-685, and Asn-687. The CPSase B stretch occupies residues 938-1462 (PHVMVIGSGV…TPPVKTHIDS (525 aa)). Arg-1093, Lys-1132, Ile-1134, Glu-1139, Gly-1164, Val-1165, His-1166, Ser-1167, Gln-1207, and Glu-1219 together coordinate ATP. Mg(2+) contacts are provided by Gln-1207, Glu-1219, and Asn-1221. Gln-1207, Glu-1219, and Asn-1221 together coordinate Mn(2+). The MGS-like domain maps to 1313-1469 (FKIPKKNILL…IDSMSSHKLI (157 aa)). The segment at 1463 to 1796 (MSSHKLIRLP…KGRVRRVVLR (334 aa)) is DHOase (dihydroorotase). Residues His-1478 and His-1480 each contribute to the Zn(2+) site. The (S)-dihydroorotate site is built by Arg-1482 and Asn-1512. Zn(2+) contacts are provided by Lys-1563, His-1597, Cys-1620, His-1621, and Glu-1644. Position 1563 is an N6-carboxylysine (Lys-1563). Residue Arg-1668 participates in (S)-dihydroorotate binding. A Zn(2+)-binding site is contributed by Asp-1693. The For DHOase activity role is filled by Asp-1693. (S)-dihydroorotate contacts are provided by His-1697 and Pro-1709. Positions 1797–1934 (GEVAYIDGQV…QAVPHPYSLL (138 aa)) are linker. Positions 1829–1862 (PTTVKTPEHSKPTQTETVRTRTASPRRLASSGPA) are disordered. The segment covering 1840–1851 (PTQTETVRTRTA) has biased composition (polar residues). The interval 1935-2242 (LHPFVGQHIL…ALLATVLGKF (308 aa)) is ATCase (Aspartate transcarbamylase). Carbamoyl phosphate is bound by residues Arg-1992 and Thr-1993. Position 2020 (Lys-2020) interacts with L-aspartate. Carbamoyl phosphate contacts are provided by Arg-2041, His-2069, and Gln-2072. The L-aspartate site is built by Arg-2102 and Arg-2163. Leu-2202 and Pro-2203 together coordinate carbamoyl phosphate.

The protein in the N-terminal section; belongs to the CarA family. This sequence in the 2nd section; belongs to the CarB family. It in the 3rd section; belongs to the metallo-dependent hydrolases superfamily. DHOase family. CAD subfamily. In the C-terminal section; belongs to the aspartate/ornithine carbamoyltransferase superfamily. ATCase family. As to quaternary structure, homohexamer. The cofactor is Mg(2+). Requires Mn(2+) as cofactor. Zn(2+) is required as a cofactor. Present in the testis but not in the liver.

It is found in the cytoplasm. The protein resides in the nucleus. It carries out the reaction hydrogencarbonate + L-glutamine + 2 ATP + H2O = carbamoyl phosphate + L-glutamate + 2 ADP + phosphate + 2 H(+). It catalyses the reaction L-glutamine + H2O = L-glutamate + NH4(+). The enzyme catalyses hydrogencarbonate + NH4(+) + 2 ATP = carbamoyl phosphate + 2 ADP + phosphate + 2 H(+). The catalysed reaction is carbamoyl phosphate + L-aspartate = N-carbamoyl-L-aspartate + phosphate + H(+). It carries out the reaction (S)-dihydroorotate + H2O = N-carbamoyl-L-aspartate + H(+). Its pathway is pyrimidine metabolism; UMP biosynthesis via de novo pathway; (S)-dihydroorotate from bicarbonate: step 1/3. It participates in pyrimidine metabolism; UMP biosynthesis via de novo pathway; (S)-dihydroorotate from bicarbonate: step 2/3. It functions in the pathway pyrimidine metabolism; UMP biosynthesis via de novo pathway; (S)-dihydroorotate from bicarbonate: step 3/3. Allosterically regulated and controlled by phosphorylation. 5-phosphoribose 1-diphosphate is an activator while UMP is an inhibitor of the CPSase reaction. In terms of biological role, multifunctional protein that encodes the first 3 enzymatic activities of the de novo pyrimidine pathway: carbamoylphosphate synthetase (CPSase; EC 6.3.5.5), aspartate transcarbamylase (ATCase; EC 2.1.3.2) and dihydroorotase (DHOase; EC 3.5.2.3). The CPSase-function is accomplished in 2 steps, by a glutamine-dependent amidotransferase activity (GATase) that binds and cleaves glutamine to produce ammonia, followed by an ammonium-dependent carbamoyl phosphate synthetase, which reacts with the ammonia, hydrogencarbonate and ATP to form carbamoyl phosphate. The endogenously produced carbamoyl phosphate is sequestered and channeled to the ATCase active site. ATCase then catalyzes the formation of carbamoyl-L-aspartate from L-aspartate and carbamoyl phosphate. In the last step, DHOase catalyzes the cyclization of carbamoyl aspartate to dihydroorotate. The protein is Multifunctional protein CAD (CAD) of Squalus acanthias (Spiny dogfish).